The chain runs to 634 residues: DNA-directed RNA polymerase subunit gamma (634 aa).

The Zn(2+) site is built by C74, C76, C89, and C92. 3 residues coordinate Mg(2+): D471, D473, and D475.

It belongs to the RNA polymerase beta' chain family. RpoC1 subfamily. As to quaternary structure, in cyanobacteria the RNAP catalytic core is composed of 2 alpha, 1 beta, 1 beta', 1 gamma and 1 omega subunit. When a sigma factor is associated with the core the holoenzyme is formed, which can initiate transcription. Mg(2+) serves as cofactor. The cofactor is Zn(2+).

It catalyses the reaction RNA(n) + a ribonucleoside 5'-triphosphate = RNA(n+1) + diphosphate. Its function is as follows. DNA-dependent RNA polymerase catalyzes the transcription of DNA into RNA using the four ribonucleoside triphosphates as substrates. In Prochlorococcus marinus (strain MIT 9312), this protein is DNA-directed RNA polymerase subunit gamma.